The primary structure comprises 82 residues: Delta-conotoxin-like SmVIA (82 aa).

Residues 1–22 form the signal peptide; that stretch reads MKLTCVMIVAVLFLIAWTFVTA. A propeptide spanning residues 23–49 is cleaved from the precursor; the sequence is DDSRNGLKNLFPKARHEMKNPEASKLN. Cystine bridges form between Cys-54-Cys-69, Cys-61-Cys-73, and Cys-68-Cys-77. The residue at position 65 (Pro-65) is a 4-hydroxyproline.

Belongs to the conotoxin O1 superfamily. Expressed by the venom duct.

It is found in the secreted. In terms of biological role, delta-conotoxins bind to site 6 of voltage-gated sodium channels (Nav) and inhibit the inactivation process. This Conus stercusmuscarum (Fly-specked cone) protein is Delta-conotoxin-like SmVIA.